The following is a 115-amino-acid chain: MPKSTNSVASKARRKRILKKAKGYWGSRGNVLTVVKHAVDKAEQYAYRDRRVKKRNFRSLWIMRINAAARQNGVSYSRLMDAIHKKNIEIDRKALAEIAVKDPAAFSLIVKTALD.

This sequence belongs to the bacterial ribosomal protein bL20 family.

Binds directly to 23S ribosomal RNA and is necessary for the in vitro assembly process of the 50S ribosomal subunit. It is not involved in the protein synthesizing functions of that subunit. The polypeptide is Large ribosomal subunit protein bL20 (Chlorobaculum tepidum (strain ATCC 49652 / DSM 12025 / NBRC 103806 / TLS) (Chlorobium tepidum)).